Consider the following 358-residue polypeptide: tRNA (guanine(26)-N(2))-dimethyltransferase (358 aa).

Positions Val-5–Leu-354 constitute a Trm1 methyltransferase domain. S-adenosyl-L-methionine contacts are provided by Arg-39, Arg-69, Asp-87, Asp-113, and Ala-114.

Belongs to the class I-like SAM-binding methyltransferase superfamily. Trm1 family.

The catalysed reaction is guanosine(26) in tRNA + 2 S-adenosyl-L-methionine = N(2)-dimethylguanosine(26) in tRNA + 2 S-adenosyl-L-homocysteine + 2 H(+). In terms of biological role, dimethylates a single guanine residue at position 26 of a number of tRNAs using S-adenosyl-L-methionine as donor of the methyl groups. This is tRNA (guanine(26)-N(2))-dimethyltransferase from Pyrobaculum calidifontis (strain DSM 21063 / JCM 11548 / VA1).